The sequence spans 375 residues: Delta(12) fatty acid dehydrogenase (375 aa).

2 consecutive transmembrane segments (helical) span residues 54–74 (IIAY…PAPL) and 77–97 (LAWP…WVIG). The Histidine box-1 signature appears at 98-102 (HECGH). Residues 110-130 (WVDDTVGFILHSFLMTPYFSW) form a helical membrane-spanning segment. The Histidine box-2 signature appears at 134–138 (HRNHH). 3 helical membrane passes run 172–192 (LLIM…TNIS), 218–238 (VLLS…AVAA), and 242–262 (AWVT…FDII). A Histidine box-3 motif is present at residues 308-312 (HVMHH).

The protein belongs to the fatty acid desaturase type 1 family. Fe cation is required as a cofactor. As to expression, seed.

It localises to the membrane. It catalyses the reaction a (9Z,12Z)-octadecadienoyl-containing glycerolipid + 2 Fe(II)-[cytochrome b5] + O2 + 2 H(+) = a (9Z)-octadec-9-en-12-ynoyl-containing glycerolipid + 2 Fe(III)-[cytochrome b5] + 2 H2O. Its pathway is lipid metabolism; polyunsaturated fatty acid biosynthesis. Its function is as follows. Changes the delta-12 double bond of linoleic acid into a triple bond in the biosynthesis of crepenynic acid. The sequence is that of Delta(12) fatty acid dehydrogenase from Crepis alpina (Hawksbeard).